The chain runs to 544 residues: BTB/POZ domain-containing protein At2g13690 (544 aa).

2 disordered regions span residues 34–66 (ASPD…PQSS) and 82–111 (LSPG…EEDD). Residues 37–55 (DTRSISSRNHIPAKSQQQR) are compositionally biased toward polar residues. The span at 93 to 103 (DPTVTTMQETE) shows a compositional bias: low complexity. The BTB domain occupies 142–225 (YDARLSLKGR…MFEESNVIIK (84 aa)).

The protein operates within protein modification; protein ubiquitination. May act as a substrate-specific adapter of an E3 ubiquitin-protein ligase complex (CUL3-RBX1-BTB) which mediates the ubiquitination and subsequent proteasomal degradation of target proteins. This chain is BTB/POZ domain-containing protein At2g13690 (PRL1-IFG), found in Arabidopsis thaliana (Mouse-ear cress).